The chain runs to 379 residues: MSNLFQNYTRADLEFIKAEGNYLFDTQGKKYLDFSTGIGVTNLGFHPQVQVALQKQAEQIWHTPNLYQNSLQEEVAAKLMAGKDYLAFFCNSGAEANEAAIKIARKATGKQEIITFQNSFHGRTFGSMSATGQDKIKVGFGDAVPHFHYAVFNDLNSVKALVTENTAAVMLELVQGESGVLPAEQDFVTALADYCQKNGLLLIIDEVQTGMGRTGKLYAFQHYGIEPDIFTLAKGLANGVPVGAMLAKKQFGSAFGPGSHGSTFGGNKLAMAASSAVLDIMTKAGFLEQAWENAHYLQEQLTSALQVADTVTQVRGLGYMIGIETTADLGQLVKATRDRGLIVLTAGTNVIRLLPPLTLTKDEIDQGIMILQEVFEQHN.

Pyridoxal 5'-phosphate-binding positions include 93-94 (GA) and F120. R123 is a binding site for N(2)-acetyl-L-ornithine. 205–208 (DEVQ) provides a ligand contact to pyridoxal 5'-phosphate. K234 is subject to N6-(pyridoxal phosphate)lysine. S262 serves as a coordination point for N(2)-acetyl-L-ornithine. A pyridoxal 5'-phosphate-binding site is contributed by T263.

Belongs to the class-III pyridoxal-phosphate-dependent aminotransferase family. ArgD subfamily. As to quaternary structure, homodimer. Pyridoxal 5'-phosphate is required as a cofactor.

Its subcellular location is the cytoplasm. It carries out the reaction N(2)-acetyl-L-ornithine + 2-oxoglutarate = N-acetyl-L-glutamate 5-semialdehyde + L-glutamate. It participates in amino-acid biosynthesis; L-arginine biosynthesis; N(2)-acetyl-L-ornithine from L-glutamate: step 4/4. This Streptococcus mutans serotype c (strain ATCC 700610 / UA159) protein is Acetylornithine aminotransferase.